A 147-amino-acid polypeptide reads, in one-letter code: Large ribosomal subunit protein uL13 (147 aa).

The protein belongs to the universal ribosomal protein uL13 family. In terms of assembly, part of the 50S ribosomal subunit.

Functionally, this protein is one of the early assembly proteins of the 50S ribosomal subunit, although it is not seen to bind rRNA by itself. It is important during the early stages of 50S assembly. The sequence is that of Large ribosomal subunit protein uL13 from Corynebacterium glutamicum (strain R).